A 219-amino-acid chain; its full sequence is Interleukin-12 subunit alpha (219 aa).

Positions Met1–Ala22 are cleaved as a signal peptide. N-linked (GlcNAc...) asparagine glycosylation is found at Asn24, Asn93, and Asn107. 3 disulfide bridges follow: Cys37-Cys110, Cys64-Cys196, and Cys85-Cys123.

The protein belongs to the IL-6 superfamily. As to quaternary structure, heterodimer with IL12B; disulfide-linked. This heterodimer is known as interleukin IL-12. Heterodimer with EBI3/IL27B; not disulfide-linked. This heterodimer is known as interleukin IL-35. Interacts with NBR1; this interaction promotes IL-12 secretion.

The protein localises to the secreted. Functionally, heterodimerizes with IL12B to form the IL-12 cytokine or with EBI3/IL27B to form the IL-35 cytokine. IL-12 is primarily produced by professional antigen-presenting cells (APCs) such as B-cells and dendritic cells (DCs) as well as macrophages and granulocytes and regulates T-cell and natural killer-cell responses, induces the production of interferon-gamma (IFN-gamma), favors the differentiation of T-helper 1 (Th1) cells and is an important link between innate resistance and adaptive immunity. Mechanistically, exerts its biological effects through a receptor composed of IL12R1 and IL12R2 subunits. Binding to the receptor results in the rapid tyrosine phosphorylation of a number of cellular substrates including the JAK family kinases TYK2 and JAK2. In turn, recruited STAT4 gets phosphorylated and translocates to the nucleus where it regulates cytokine/growth factor responsive genes. As part of IL-35, plays essential roles in maintaining the immune homeostasis of the liver microenvironment and also functions as an immune-suppressive cytokine. Mediates biological events through unconventional receptors composed of IL12RB2 and gp130/IL6ST heterodimers or homodimers. Signaling requires the transcription factors STAT1 and STAT4, which form a unique heterodimer that binds to distinct DNA sites. The chain is Interleukin-12 subunit alpha (IL12A) from Macaca mulatta (Rhesus macaque).